Reading from the N-terminus, the 114-residue chain is DNA-directed RNA polymerases II, IV and V subunit 9B (114 aa).

Residues cysteine 7, cysteine 10, cysteine 29, cysteine 32, cysteine 76, cysteine 79, cysteine 103, and cysteine 108 each contribute to the Zn(2+) site. The segment at 72-113 (KAVRCAKCQHGEAVFFQATARGEEGMTLFFVCCNPNCSHRWR) adopts a TFIIS-type zinc-finger fold.

This sequence belongs to the archaeal RpoM/eukaryotic RPA12/RPB9/RPC11 RNA polymerase family. In terms of assembly, component of the RNA polymerase II, IV and V complexes. Interacts with NRPD1.

The protein resides in the nucleus. Its subcellular location is the nucleolus. Functionally, DNA-dependent RNA polymerase catalyzes the transcription of DNA into RNA using the four ribonucleoside triphosphates as substrates. Component of RNA polymerase II which synthesizes mRNA precursors and many functional non-coding RNAs. Pol II is the central component of the basal RNA polymerase II transcription machinery. It is composed of mobile elements that move relative to each other. Component of RNA polymerases IV and V which mediate short-interfering RNAs (siRNA) accumulation and subsequent RNA-directed DNA methylation-dependent (RdDM) transcriptional gene silencing (TGS) of endogenous repeated sequences, including transposable elements. Required for RNA silencing. This is DNA-directed RNA polymerases II, IV and V subunit 9B (NRPB9B) from Arabidopsis thaliana (Mouse-ear cress).